The primary structure comprises 511 residues: Probable lipid II flippase MurJ (511 aa).

11 helical membrane-spanning segments follow: residues 25–45 (DILI…FISF), 85–105 (SSIL…GGFF), 133–153 (IMFP…ILNS), 156–178 (YFSI…SVFF), 245–265 (ISLI…ISWI), 271–291 (LIEF…FTSL), 315–335 (LIVS…VIIV), 356–376 (LYSC…AFYA), 400–420 (FLIF…TSWV), 442–462 (FIFI…LFVV), and 481–501 (LFFG…ILGI).

This sequence belongs to the MurJ/MviN family.

The protein localises to the cell inner membrane. It participates in cell wall biogenesis; peptidoglycan biosynthesis. Its function is as follows. Involved in peptidoglycan biosynthesis. Transports lipid-linked peptidoglycan precursors from the inner to the outer leaflet of the cytoplasmic membrane. This chain is Probable lipid II flippase MurJ, found in Buchnera aphidicola subsp. Acyrthosiphon pisum (strain APS) (Acyrthosiphon pisum symbiotic bacterium).